A 405-amino-acid chain; its full sequence is S-adenosylmethionine synthase (405 aa).

139-144 serves as a coordination point for ATP; the sequence is GQGSVD.

It belongs to the AdoMet synthase 2 family. Mg(2+) serves as cofactor.

It catalyses the reaction L-methionine + ATP + H2O = S-adenosyl-L-methionine + phosphate + diphosphate. It functions in the pathway amino-acid biosynthesis; S-adenosyl-L-methionine biosynthesis; S-adenosyl-L-methionine from L-methionine: step 1/1. Catalyzes the formation of S-adenosylmethionine from methionine and ATP. The polypeptide is S-adenosylmethionine synthase (Thermococcus gammatolerans (strain DSM 15229 / JCM 11827 / EJ3)).